The primary structure comprises 200 residues: Holliday junction branch migration complex subunit RuvA (200 aa).

The domain I stretch occupies residues 1–63; the sequence is MFEYLTGLIT…EDAITLFGFA (63 aa). The tract at residues 64-142 is domain II; sequence TQAEKRLFTQ…AVQDEVQLDF (79 aa). Residues 143–151 form a flexible linker region; sequence TAPGPLGPS. Positions 151 to 200 are domain III; sequence SAALQDALAALESLGYTTKQVERVQKQLEGLQGELSTNDYLSQGLKLLSR.

It belongs to the RuvA family. As to quaternary structure, homotetramer. Forms an RuvA(8)-RuvB(12)-Holliday junction (HJ) complex. HJ DNA is sandwiched between 2 RuvA tetramers; dsDNA enters through RuvA and exits via RuvB. An RuvB hexamer assembles on each DNA strand where it exits the tetramer. Each RuvB hexamer is contacted by two RuvA subunits (via domain III) on 2 adjacent RuvB subunits; this complex drives branch migration. In the full resolvosome a probable DNA-RuvA(4)-RuvB(12)-RuvC(2) complex forms which resolves the HJ.

The protein resides in the cytoplasm. Its function is as follows. The RuvA-RuvB-RuvC complex processes Holliday junction (HJ) DNA during genetic recombination and DNA repair, while the RuvA-RuvB complex plays an important role in the rescue of blocked DNA replication forks via replication fork reversal (RFR). RuvA specifically binds to HJ cruciform DNA, conferring on it an open structure. The RuvB hexamer acts as an ATP-dependent pump, pulling dsDNA into and through the RuvAB complex. HJ branch migration allows RuvC to scan DNA until it finds its consensus sequence, where it cleaves and resolves the cruciform DNA. In Limosilactobacillus fermentum (strain NBRC 3956 / LMG 18251) (Lactobacillus fermentum), this protein is Holliday junction branch migration complex subunit RuvA.